A 330-amino-acid chain; its full sequence is GTPase Obg (330 aa).

Residues 1–159 (MNFIDEVKIY…MWIHLSLKLL (159 aa)) form the Obg domain. One can recognise an OBG-type G domain in the interval 160 to 327 (SDVGLVGLPN…IVKLALKIIK (168 aa)). GTP-binding positions include 166-173 (GLPNAGKS), 191-195 (FTTLV), 212-215 (DIPG), 279-282 (NKCD), and 308-310 (STY). Mg(2+)-binding residues include serine 173 and threonine 193.

Belongs to the TRAFAC class OBG-HflX-like GTPase superfamily. OBG GTPase family. Monomer. It depends on Mg(2+) as a cofactor.

Its subcellular location is the cytoplasm. Functionally, an essential GTPase which binds GTP, GDP and possibly (p)ppGpp with moderate affinity, with high nucleotide exchange rates and a fairly low GTP hydrolysis rate. Plays a role in control of the cell cycle, stress response, ribosome biogenesis and in those bacteria that undergo differentiation, in morphogenesis control. This chain is GTPase Obg, found in Rickettsia akari (strain Hartford).